The primary structure comprises 208 residues: Histone H1t (208 aa).

Low complexity predominate over residues 1–16 (MSETVPAASAGAVPAV). Residues 1-40 (MSETVPAASAGAVPAVMEKPLTKKRGKKPAGLTSASRKAP) are disordered. Serine 9 is subject to Phosphoserine. In terms of domain architecture, H15 spans 40 to 113 (PNLSVSKLIT…GASGSFKLSK (74 aa)). Residue arginine 58 is modified to Citrulline. A disordered region spans residues 102 to 208 (GTGASGSFKL…ANIRKATSRK (107 aa)). Over residues 111–136 (LSKKVLPKSTRRKANKSASAKTKKLV) the composition is skewed to basic residues. A Phosphoserine modification is found at serine 143. The segment covering 148-157 (KTNKRAKKPR) has biased composition (basic residues). At threonine 159 the chain carries Phosphothreonine. Over residues 163-175 (KAVRSGRKAKGAK) the composition is skewed to basic residues. A phosphoserine mark is found at serine 167 and serine 182. The span at 187–208 (RATKPKLTQHHKANIRKATSRK) shows a compositional bias: basic residues.

It belongs to the histone H1/H5 family. In terms of processing, phosphorylated in early spermatids. Citrullination at Arg-58 (H1R54ci) by PADI4 takes place within the DNA-binding site of H1 and results in its displacement from chromatin and global chromatin decondensation, thereby promoting pluripotency and stem cell maintenance.

Its function is as follows. Testis-specific histone H1 that forms less compacted chromatin compared to other H1 histone subtypes. Formation of more relaxed chromatin may be required to promote chromatin architecture required for proper chromosome regulation during meiosis, such as homologous recombination. Histones H1 act as linkers that bind to nucleosomes and compact polynucleosomes into a higher-order chromatin configuration. This Macaca mulatta (Rhesus macaque) protein is Histone H1t.